The primary structure comprises 221 residues: Lipoprotein-releasing system ATP-binding protein LolD (221 aa).

The 215-residue stretch at 6-220 (LTLKNVSKHY…YKLKHGALNM (215 aa)) folds into the ABC transporter domain. 42–49 (GSSGSGKS) contributes to the ATP binding site.

Belongs to the ABC transporter superfamily. Lipoprotein translocase (TC 3.A.1.125) family. The complex is composed of two ATP-binding proteins (LolD) and two transmembrane proteins (LolC and LolE).

The protein resides in the cell inner membrane. Part of the ABC transporter complex LolCDE involved in the translocation of mature outer membrane-directed lipoproteins, from the inner membrane to the periplasmic chaperone, LolA. Responsible for the formation of the LolA-lipoprotein complex in an ATP-dependent manner. This is Lipoprotein-releasing system ATP-binding protein LolD from Rickettsia bellii (strain RML369-C).